The sequence spans 320 residues: Olfactory receptor 2T12 (320 aa).

At 1–23 the chain is on the extracellular side; the sequence is MEMRNTTPDFILLGLFNHTRAHQ. N-linked (GlcNAc...) asparagine glycosylation occurs at N17. Residues 24–47 traverse the membrane as a helical segment; sequence VLFMMLLATVLTSLFSNALMILLI. At 48–55 the chain is on the cytoplasmic side; it reads HWDHRLHR. A helical transmembrane segment spans residues 56–77; sequence PMYFLLSQLSLMDMMLVSTTVP. Residues 78–98 are Extracellular-facing; sequence KMAADYLTGNKAISRAGCGVQ. C95 and C187 form a disulfide bridge. A helical transmembrane segment spans residues 99–118; the sequence is IFFLPTLGGGECFLLAAMAY. Topologically, residues 119–137 are cytoplasmic; that stretch reads DRYAAVCHPLRYPTLMSWQ. A helical membrane pass occupies residues 138–156; the sequence is LCLRMTMSSWLLGAADGLL. Residues 157–193 are Extracellular-facing; that stretch reads QAVATLSFPYCGAHEIDHFFCEAPVLVRLACADTSVF. The chain crosses the membrane as a helical span at residues 194-217; it reads ENAMYICCVLMLLVPFSLILSSYG. At 218–234 the chain is on the cytoplasmic side; it reads LILAAVLLMRSTEARKK. Residues 235–257 traverse the membrane as a helical segment; it reads AFATCSSHVAVVGLFYGAGIFTY. Topologically, residues 258-270 are extracellular; it reads MRPKSHRSTNHDK. A helical membrane pass occupies residues 271–290; that stretch reads VVSAFYTMFTPLLNPLIYSV. Over 291 to 320 the chain is Cytoplasmic; that stretch reads RNSEVKEALKRWLGTCVNLKHQQNEAHRSR.

It belongs to the G-protein coupled receptor 1 family.

The protein localises to the cell membrane. Functionally, odorant receptor. In Homo sapiens (Human), this protein is Olfactory receptor 2T12 (OR2T12).